We begin with the raw amino-acid sequence, 320 residues long: NAC domain-containing protein 20 (320 aa).

The NAC domain occupies Leu-14–Lys-170. A DNA-binding region spans residues Ile-114 to Lys-176.

In terms of assembly, forms homodimers. Forms heterodimers with NAC26. As to expression, expressed in developing seeds.

Its subcellular location is the nucleus. The protein resides in the endoplasmic reticulum. Functionally, transcription factor that acts redundantly with NAC26 to regulate the expression of genes involved in the biosynthesis of starch and storage proteins in grain. Directly binds to the promoters of starch synthase 1 (SS1), pullulanase (PUL), glutelin A1 (GLUA1), glutelins B4 and B5 (GLUB4 and GLUB5), alpha-globulin and 16 kDa prolamin, and activates their expression. Possesses transactivation activity in yeast. This chain is NAC domain-containing protein 20, found in Oryza sativa subsp. indica (Rice).